The primary structure comprises 274 residues: Purine nucleoside phosphorylase YlmD (274 aa).

Inosine is bound at residue 46-47; the sequence is LH. His-80, Cys-125, His-142, Cys-182, Cys-183, Cys-242, and Cys-245 together coordinate Zn(2+). Arg-262 is a binding site for inosine.

Belongs to the purine nucleoside phosphorylase YfiH/LACC1 family. Zn(2+) serves as cofactor.

The catalysed reaction is adenosine + phosphate = alpha-D-ribose 1-phosphate + adenine. It catalyses the reaction S-methyl-5'-thioadenosine + phosphate = 5-(methylsulfanyl)-alpha-D-ribose 1-phosphate + adenine. It carries out the reaction inosine + phosphate = alpha-D-ribose 1-phosphate + hypoxanthine. The enzyme catalyses adenosine + H2O + H(+) = inosine + NH4(+). In terms of biological role, purine nucleoside enzyme that catalyzes the phosphorolysis of adenosine and inosine nucleosides, yielding D-ribose 1-phosphate and the respective free bases, adenine and hypoxanthine. Also catalyzes the phosphorolysis of S-methyl-5'-thioadenosine into adenine and S-methyl-5-thio-alpha-D-ribose 1-phosphate. Also has adenosine deaminase activity. This is Purine nucleoside phosphorylase YlmD from Geobacillus stearothermophilus (strain DSM 13240 / CIP 106956 / 10).